Reading from the N-terminus, the 508-residue chain is MGLPWYRVHTVVLNDPGRLLAVHIMHTALVAGWAGSMALYELAVFDPSDPVLDPMWRQGMFVIPFMTRLGITNSWGGWNITGGTITNPGLWSYEGVAGAHIVFSGLCFLAAIWHWVYWDLEIFCDERTGKPSLDLPKIFGIHLFLSGVACFGFGAFHVTGLYGPGIWVSDPYGLTGKVQPVNPAWGVEGFDPFVPGGIASHHIAAGTLGILAGLFHLSVRPPQRLYKGLRMGNIETVLSSSIAAVFFAAFVVAGTMWYGSATTPIELFGPTRYQWDQGYFQQEIYRRVSAGLAENQSLSEAWAKIPEKLAFYDYIGNNPAKGGLFRAGSMDNGDGIAVGWLGHPVFRNKEGRELFVRRMPTFFETFPVVLVDGDGIVRADVPFRRAESKYSVEQVGVTVEFYGGELNGVSYSDPATVKKYARRAQLGEIFELDRATLKSDGVFRSSPRGWFTFGHASFALLFFFGHIWHGARTLFRDVFAGIDPDLDAQVEFGAFQKLGDPTTKRQAV.

A run of 6 helical transmembrane segments spans residues 21–36 (AVHI…WAGS), 101–115 (IVFS…IWHW), 140–156 (GIHL…FGAF), 203–218 (IAAG…FHLS), 237–252 (VLSS…AFVV), and 457–472 (SFAL…HGAR).

The protein belongs to the PsbB/PsbC family. PsbB subfamily. PSII is composed of 1 copy each of membrane proteins PsbA, PsbB, PsbC, PsbD, PsbE, PsbF, PsbH, PsbI, PsbJ, PsbK, PsbL, PsbM, PsbT, PsbX, PsbY, PsbZ, Psb30/Ycf12, at least 3 peripheral proteins of the oxygen-evolving complex and a large number of cofactors. It forms dimeric complexes. Interacts with PAM68. Interacts with HHL1. Binds multiple chlorophylls. PSII binds additional chlorophylls, carotenoids and specific lipids. serves as cofactor.

It is found in the plastid. Its subcellular location is the chloroplast thylakoid membrane. Its function is as follows. One of the components of the core complex of photosystem II (PSII). It binds chlorophyll and helps catalyze the primary light-induced photochemical processes of PSII. PSII is a light-driven water:plastoquinone oxidoreductase, using light energy to abstract electrons from H(2)O, generating O(2) and a proton gradient subsequently used for ATP formation. This chain is Photosystem II CP47 reaction center protein, found in Arabidopsis thaliana (Mouse-ear cress).